The primary structure comprises 123 residues: Holo-[acyl-carrier-protein] synthase (123 aa).

Residues Asp-9 and Glu-57 each coordinate Mg(2+).

The protein belongs to the P-Pant transferase superfamily. AcpS family. Requires Mg(2+) as cofactor.

The protein resides in the cytoplasm. The catalysed reaction is apo-[ACP] + CoA = holo-[ACP] + adenosine 3',5'-bisphosphate + H(+). Its function is as follows. Transfers the 4'-phosphopantetheine moiety from coenzyme A to a Ser of acyl-carrier-protein. In Streptomyces avermitilis (strain ATCC 31267 / DSM 46492 / JCM 5070 / NBRC 14893 / NCIMB 12804 / NRRL 8165 / MA-4680), this protein is Holo-[acyl-carrier-protein] synthase.